The primary structure comprises 400 residues: CinA-like protein (400 aa).

It belongs to the CinA family.

The chain is CinA-like protein from Escherichia coli (strain SMS-3-5 / SECEC).